We begin with the raw amino-acid sequence, 416 residues long: E3 ubiquitin-protein ligase makorin-2 (416 aa).

C3H1-type zinc fingers lie at residues 2-29 (STKQ…HDLA) and 31-58 (SKPS…HTKP). The tract at residues 61-144 (AAGGAVGPAP…DPQTSPEMKP (84 aa)) is disordered. A compositionally biased stretch (basic and acidic residues) spans 95–123 (HSNEPGKREKKTLVLRDRNLTGLAEDKTP). The residue at position 139 (Ser-139) is a Phosphoserine. The segment at 165–192 (SNEPQLCPYAAAGECRFGDACVYLHGDM) adopts a C3H1-type 3 zinc-finger fold. The tract at residues 193-222 (CEICRLQVLHPFDPEQRKAHEKMCMSTFEH) is makorin-type Cys-His. An RING-type zinc finger spans residues 238-292 (CSICMEVILEKASASERRFGILSNCSHTYCLSCIRQWRCAKQFENPIIKSCPECR). The C3H1-type 4 zinc finger occupies 321–350 (GMGKKACKYFEQGKGTCPFGSKCLYRHAYP).

In terms of assembly, interacts with PDLIM2 (via LIM zinc-binding domain). Interacts with RELA. Highly expressed in the testis, and lower expression in the brain, thymus, heart, lung, liver, spleen, kidney, ovary, uterus, and seminal vesicle (at protein level). Expressed in primary immune cells, such as CD4-positive and CD8-positive T cells, CD19-positive B cells and CD11c-positive dendritic cells, and in embryonic fibroblasts (at protein level).

The protein localises to the cytoplasm. It localises to the nucleus. The catalysed reaction is S-ubiquitinyl-[E2 ubiquitin-conjugating enzyme]-L-cysteine + [acceptor protein]-L-lysine = [E2 ubiquitin-conjugating enzyme]-L-cysteine + N(6)-ubiquitinyl-[acceptor protein]-L-lysine.. It functions in the pathway protein modification; protein ubiquitination. E3 ubiquitin ligase catalyzing the covalent attachment of ubiquitin moieties onto substrate proteins. Promotes the polyubiquitination and proteasome-dependent degradation of RELA/p65, thereby suppressing RELA-mediated NF-kappa-B transactivation and negatively regulating inflammatory responses. Plays a role in the regulation of spermiation and in male fertility. This Mus musculus (Mouse) protein is E3 ubiquitin-protein ligase makorin-2 (Mkrn2).